The following is a 539-amino-acid chain: DNA damage-binding protein CMR1 (539 aa).

Residues 22–89 (LNLPTEAKKE…ALKQEDLGGS (68 aa)) form a disordered region. Residues 27-39 (EAKKESVDPEVAP) show a composition bias toward basic and acidic residues. WD repeat units follow at residues 182 to 223 (VTKE…EPLQ), 226 to 268 (LHHA…DVLD), 316 to 356 (LGEK…TART), 377 to 415 (NSRL…LDML), 462 to 505 (GRWV…LAHL), and 508 to 539 (ALMT…YWWE).

The protein belongs to the WD repeat DDB2/WDR76 family.

Its function is as follows. DNA-binding protein that binds to both single- and double-stranded DNA. Binds preferentially to UV-damaged DNA. May be involved in DNA-metabolic processes. The polypeptide is DNA damage-binding protein CMR1 (Yarrowia lipolytica (strain CLIB 122 / E 150) (Yeast)).